We begin with the raw amino-acid sequence, 439 residues long: MLKVWEPQAFLEFLNRRRTEFYPEIEAQVRAILERVRREGDGALYAFTRQFDGADLEATGLRVTEAEYREAEAAVSAAFRAALQVAVENIAAFHRPQVPTSWFTTRPDGTIVGQRVTPVDRAGVYVPGGSAPLFSCLLMTAIPAVVAGVPEVIVCTPPDRNGRIDPHMLVAARAAGVKDVYKVGGAQAIGAMAYGTATVPRVDKIAGPGNYYVTLAKKLVFGPVGIDMLAGPTEVMAVDDGSVDAEWLAADLLSQAEHPNGMVILVTTAGPERIAAVGAAMARHTAALPRAETIRRSVAELGAALAVDTLEEAADLVNAVGPEHLEVGVADPWAFLPLVRHAGSIFLGRWTPEAMGDYIAGPSNVIPTEGTARYASPVCVETFIKRSAVTCYSEAAFRAQAPHAVRLALTEDLLAHAASMQIRLAKPDGESPSEGREAG.

NAD(+) is bound by residues tyrosine 125, glutamine 187, and asparagine 210. Residues threonine 233, glutamine 255, and histidine 258 each contribute to the substrate site. Zn(2+) is bound by residues glutamine 255 and histidine 258. Catalysis depends on proton acceptor residues glutamate 323 and histidine 324. Residues histidine 324, aspartate 357, glutamate 411, and histidine 416 each contribute to the substrate site. A Zn(2+)-binding site is contributed by aspartate 357. Histidine 416 contributes to the Zn(2+) binding site.

The protein belongs to the histidinol dehydrogenase family. Requires Zn(2+) as cofactor.

The catalysed reaction is L-histidinol + 2 NAD(+) + H2O = L-histidine + 2 NADH + 3 H(+). Its pathway is amino-acid biosynthesis; L-histidine biosynthesis; L-histidine from 5-phospho-alpha-D-ribose 1-diphosphate: step 9/9. In terms of biological role, catalyzes the sequential NAD-dependent oxidations of L-histidinol to L-histidinaldehyde and then to L-histidine. The chain is Histidinol dehydrogenase from Symbiobacterium thermophilum (strain DSM 24528 / JCM 14929 / IAM 14863 / T).